A 560-amino-acid chain; its full sequence is Vesicular glutamate transporter 1 (560 aa).

Over 1 to 63 the chain is Cytoplasmic; it reads MEFRQEEFRK…CTCFGLPRRY (63 aa). A helical transmembrane segment spans residues 64–84; sequence IIAIMSGLGFCISFGIRCNLG. Topologically, residues 85 to 116 are extracellular; the sequence is VAIVSMVNNSTTHRGGHVVMQKAQFNWDPETV. A helical transmembrane segment spans residues 117 to 137; that stretch reads GLIHGSFFWGYIVTQIPGGFI. Over 138–140 the chain is Cytoplasmic; the sequence is CQK. A helical membrane pass occupies residues 141-161; it reads FAANRVFGFAIVATSTLNMLI. At 162 to 169 the chain is on the extracellular side; sequence PSAARVHY. Residues 170–190 traverse the membrane as a helical segment; sequence GCVIFVRILQGLVEGVTYPAC. Topologically, residues 191-208 are cytoplasmic; the sequence is HGIWSKWAPPLERSRLAT. Residues 209–229 form a helical membrane-spanning segment; sequence TAFCGSYAGAVVAMPLAGVLV. At 230 to 236 the chain is on the extracellular side; it reads QYSGWSS. A helical transmembrane segment spans residues 237–257; that stretch reads VFYVYGSFGIFWYLFWLLVSY. Over 258-302 the chain is Cytoplasmic; sequence ESPALHPSISEEERKYIEDAIGESAKLMNPVTKFNTPWRRFFTSM. Residues 303 to 323 traverse the membrane as a helical segment; sequence PVYAIIVANFCRSWTFYLLLI. The Extracellular portion of the chain corresponds to 324–341; the sequence is SQPAYFEEVFGFEISKVG. A helical membrane pass occupies residues 342 to 362; sequence LVSALPHLVMTIIVPIGGQIA. Topologically, residues 363-378 are cytoplasmic; the sequence is DFLRSRRIMSTTNVRK. Residues 379–399 form a helical membrane-spanning segment; sequence LMNCGGFGMEATLLLVVGYSH. The Extracellular portion of the chain corresponds to 400 to 401; that stretch reads SK. The helical transmembrane segment at 402–422 threads the bilayer; it reads GVAISFLVLAVGFSGFAISGF. Over 423-435 the chain is Cytoplasmic; it reads NVNHLDIAPRYAS. A helical transmembrane segment spans residues 436–456; that stretch reads ILMGISNGVGTLSGMVCPIIV. Topologically, residues 457–469 are extracellular; it reads GAMTKHKTREEWQ. The helical transmembrane segment at 470-490 threads the bilayer; sequence YVFLIASLVHYGGVIFYGVFA. Residues 491–560 lie on the Cytoplasmic side of the membrane; sequence SGEKQPWAEP…PRPPPPVRDY (70 aa). Positions 497–560 are disordered; sequence WAEPEEMSEE…PRPPPPVRDY (64 aa). A Phosphoserine modification is found at Ser-504. A compositionally biased stretch (acidic residues) spans 520–529; sequence DESEMEDEAE. 2 stretches are compositionally biased toward pro residues: residues 531 to 540 and 550 to 560; these read PGAPPAPPPS and PPRPPPPVRDY.

Belongs to the major facilitator superfamily. Sodium/anion cotransporter family. VGLUT subfamily. In terms of assembly, interacts with SHANK3.

It localises to the cytoplasmic vesicle. It is found in the secretory vesicle. Its subcellular location is the synaptic vesicle membrane. The protein resides in the cell membrane. The protein localises to the synapse. It localises to the synaptosome. The enzyme catalyses L-glutamate(out) = L-glutamate(in). The catalysed reaction is chloride(in) = chloride(out). It catalyses the reaction 3 Na(+)(out) + phosphate(out) = 3 Na(+)(in) + phosphate(in). It carries out the reaction phosphate(in) = phosphate(out). The enzyme catalyses K(+)(in) + H(+)(out) = K(+)(out) + H(+)(in). With respect to regulation, chloride channel activity is allosterically activated by lumenal H(+) and Cl(-) leading to synaptic vesicles acidification. The L-glutamate transport activity is allosterically activated by lumenal H(+) and Cl(-). The allosteric activation by H(+) efficiently prevents non-vesicular efflux across the plasma membrane, thereby restricting L-glutamate transport activity to acidic membranes such as synaptic vesicles. Multifunctional transporter that transports L-glutamate as well as multiple ions such as chloride, proton, potassium, sodium and phosphate. At the synaptic vesicle membrane, mainly functions as an uniporter which transports preferentially L-glutamate but also phosphate from the cytoplasm into synaptic vesicles at presynaptic nerve terminals of excitatory neural cells. The L-glutamate or phosphate uniporter activity is electrogenic and is driven by the proton electrochemical gradient, mainly by the electrical gradient established by the vacuolar H(+)-ATPase across the synaptic vesicle membrane. In addition, functions as a chloride channel that allows a chloride permeation through the synaptic vesicle membrane that affects the proton electrochemical gradient and promotes synaptic vesicles acidification. Moreover, may function as a K(+)/H(+) antiport allowing to maintain the electrical gradient and to decrease chemical gradient and therefore sustain vesicular glutamate uptake. The vesicular K(+)/H(+) antiport activity is electroneutral. At the plasma membrane, following exocytosis, functions as a symporter of Na(+) and phosphate from the extracellular space to the cytoplasm allowing synaptic phosphate homeostasis regulation. The symporter activity is driven by an inside negative membrane potential and is electrogenic. Is necessary for synaptic signaling of visual-evoked responses from photoreceptors. In Bos taurus (Bovine), this protein is Vesicular glutamate transporter 1.